A 218-amino-acid polypeptide reads, in one-letter code: Large ribosomal subunit protein uL4 (218 aa).

The tract at residues 55–83 (THATKTRGMVSGGGKKPWKQKGTGRARQG) is disordered.

The protein belongs to the universal ribosomal protein uL4 family. As to quaternary structure, part of the 50S ribosomal subunit.

Functionally, one of the primary rRNA binding proteins, this protein initially binds near the 5'-end of the 23S rRNA. It is important during the early stages of 50S assembly. It makes multiple contacts with different domains of the 23S rRNA in the assembled 50S subunit and ribosome. Its function is as follows. Forms part of the polypeptide exit tunnel. In Bifidobacterium longum (strain DJO10A), this protein is Large ribosomal subunit protein uL4.